The chain runs to 288 residues: N-acetylneuraminate lyase (288 aa).

Aceneuramate is bound by residues Ser44 and Thr45. Tyr133 functions as the Proton donor in the catalytic mechanism. Lys161 functions as the Schiff-base intermediate with substrate in the catalytic mechanism. Residues Thr163, Gly185, Asp187, Glu188, and Ser204 each contribute to the aceneuramate site.

This sequence belongs to the DapA family. NanA subfamily. In terms of assembly, homotetramer.

The protein localises to the cytoplasm. The catalysed reaction is aceneuramate = aldehydo-N-acetyl-D-mannosamine + pyruvate. Its pathway is amino-sugar metabolism; N-acetylneuraminate degradation; D-fructose 6-phosphate from N-acetylneuraminate: step 1/5. Catalyzes the reversible aldol cleavage of N-acetylneuraminic acid (sialic acid; Neu5Ac) to form pyruvate and N-acetylmannosamine (ManNAc) via a Schiff base intermediate. The polypeptide is N-acetylneuraminate lyase (Clostridium perfringens (strain SM101 / Type A)).